A 347-amino-acid chain; its full sequence is Guanine nucleotide-binding protein subunit beta (347 aa).

WD repeat units follow at residues 60 to 90 (GHLA…LVWD), 102 to 132 (LRSS…SIYN), 148 to 177 (SHTG…ILWD), 189 to 219 (DHNG…KLWD), 231 to 261 (GHEA…RLFD), 275 to 305 (NILC…NVWD), and 317 to 347 (GHGN…KIWA).

Belongs to the WD repeat G protein beta family. As to quaternary structure, g proteins are composed of 3 units, alpha, beta and gamma. Interacts with gpgA, and this requires phlp1.

The protein localises to the cytoplasm. It localises to the cell membrane. Guanine nucleotide-binding proteins (G proteins) are involved as a modulator or transducer in various transmembrane signaling systems. The beta and gamma chains are required for the GTPase activity, for replacement of GDP by GTP, and for G protein-effector interaction. Required for normal chemotaxis in response to cAMP and for aggregation during scorocarp development. This Dictyostelium discoideum (Social amoeba) protein is Guanine nucleotide-binding protein subunit beta (gpbA).